A 54-amino-acid polypeptide reads, in one-letter code: Large ribosomal subunit protein bL32c (54 aa).

It belongs to the bacterial ribosomal protein bL32 family.

It localises to the plastid. Its subcellular location is the chloroplast. This Panax ginseng (Korean ginseng) protein is Large ribosomal subunit protein bL32c.